Here is a 438-residue protein sequence, read N- to C-terminus: L-cysteine:1D-myo-inositol 2-amino-2-deoxy-alpha-D-glucopyranoside ligase (438 aa).

Positions 1 to 27 are disordered; it reads MDSWTSPDVPALPFTAEGPRVHDTARG. Residue Cys45 coordinates Zn(2+). Residues 45–48, Thr60, and 83–85 each bind L-cysteinyl-5'-AMP; these read CGIT and NVT. A 'HIGH' region motif is present at residues 47–57; it reads ITPYDATHLGH. Residues 197-202 carry the 'ERGGDP' region motif; sequence DRGGDP. Trp238 contacts L-cysteinyl-5'-AMP. Cys242 lines the Zn(2+) pocket. Position 260-262 (260-262) interacts with L-cysteinyl-5'-AMP; it reads GDD. His267 serves as a coordination point for Zn(2+). Val293 provides a ligand contact to L-cysteinyl-5'-AMP. The short motif at 299-303 is the 'KMSKS' region element; the sequence is KMSKS.

It belongs to the class-I aminoacyl-tRNA synthetase family. MshC subfamily. In terms of assembly, monomer. The cofactor is Zn(2+).

It catalyses the reaction 1D-myo-inositol 2-amino-2-deoxy-alpha-D-glucopyranoside + L-cysteine + ATP = 1D-myo-inositol 2-(L-cysteinylamino)-2-deoxy-alpha-D-glucopyranoside + AMP + diphosphate + H(+). Functionally, catalyzes the ATP-dependent condensation of GlcN-Ins and L-cysteine to form L-Cys-GlcN-Ins. The protein is L-cysteine:1D-myo-inositol 2-amino-2-deoxy-alpha-D-glucopyranoside ligase of Kytococcus sedentarius (strain ATCC 14392 / DSM 20547 / JCM 11482 / CCUG 33030 / NBRC 15357 / NCTC 11040 / CCM 314 / 541) (Micrococcus sedentarius).